Here is a 411-residue protein sequence, read N- to C-terminus: Citrate synthase (411 aa).

Active-site residues include histidine 304 and aspartate 363.

This sequence belongs to the citrate synthase family.

The catalysed reaction is oxaloacetate + acetyl-CoA + H2O = citrate + CoA + H(+). It functions in the pathway carbohydrate metabolism; tricarboxylic acid cycle; isocitrate from oxaloacetate: step 1/2. The sequence is that of Citrate synthase (gltA) from Rickettsia massiliae.